The following is a 614-amino-acid chain: Maltose permease MAL31 (614 aa).

The interval 1–48 (MKGLSSLINRKKDRNDSHLDEIENGVNATEFNSIEMEEQGKKSDFDLS) is disordered. The Cytoplasmic portion of the chain corresponds to 1 to 108 (MKGLSSLINR…AAAWSLLVST (108 aa)). The segment covering 38-48 (EQGKKSDFDLS) has biased composition (basic and acidic residues). Residues 109-129 (TLIQEGYDTAILGAFYALPVF) form a helical membrane-spanning segment. Residues 130 to 144 (QKKYGSLNSNTGDYE) are Extracellular-facing. Residues 145-165 (ISVSWQIGLCLCYMAGEIVGL) traverse the membrane as a helical segment. Residues 166–180 (QMTGPSVDYMGNRYT) are Cytoplasmic-facing. The helical transmembrane segment at 181–201 (LIMALFFLAAFIFILYFCKSL) threads the bilayer. Position 202 (Gly202) is a topological domain, extracellular. Residues 203 to 223 (MIAVGQALCGMPWGCFQCLTV) traverse the membrane as a helical segment. Over 224 to 236 (SYASEICPLALRY) the chain is Cytoplasmic. A helical membrane pass occupies residues 237 to 257 (YLTTYSNLCWAFGQLFAAGIM). Residues 258-272 (KNSQNKYANSELGYK) lie on the Extracellular side of the membrane. The helical transmembrane segment at 273 to 293 (LPFALQWIWPLPLAVGIFFAP) threads the bilayer. Residues 294–364 (ESPWWLVKKG…KDGINRRRTR (71 aa)) lie on the Cytoplasmic side of the membrane. A helical membrane pass occupies residues 365 to 385 (IACLCWIGQCSCGASLIGYST). At 386 to 398 (YFYEKAGVSTDTA) the chain is on the extracellular side. The chain crosses the membrane as a helical span at residues 399-419 (FTFSIIQYCLGIAATFISWWA). The Cytoplasmic segment spans residues 420 to 427 (SKYCGRFD). A helical transmembrane segment spans residues 428 to 448 (LYAFGLAFQAIMFFIIGGLGC). The Extracellular portion of the chain corresponds to 449–460 (SDTHGAKMGSGA). A helical membrane pass occupies residues 461-481 (LLMVVAFFYNLGIAPVVFCLV). Over 482 to 493 (SEIPSSRLRTKT) the chain is Cytoplasmic. The helical transmembrane segment at 494-514 (IILARNAYNVIQVVVTVLIMY) threads the bilayer. At 515-526 (QLNSEKWNWGAK) the chain is on the extracellular side. A helical membrane pass occupies residues 527–547 (SGFFWGGFCLATLAWAVVDLP). The Cytoplasmic portion of the chain corresponds to 548-614 (ETAGRTFIEI…GRNTSSVVNK (67 aa)). The interval 595–614 (EDLETSVVDEGRNTSSVVNK) is disordered.

Belongs to the major facilitator superfamily. Sugar transporter (TC 2.A.1.1) family.

It localises to the membrane. Its function is as follows. High-affinity uptake of maltose and maltotriose. Also transports turanose but not alpha-methylglucoside, melezitose or trehalose. The protein is Maltose permease MAL31 (MAL31) of Saccharomyces cerevisiae (strain ATCC 204508 / S288c) (Baker's yeast).